A 603-amino-acid chain; its full sequence is Elongation factor 4 (603 aa).

One can recognise a tr-type G domain in the interval Ser-7 to Ser-189. GTP-binding positions include Asp-19–Thr-24 and Asn-136–Asp-139.

Belongs to the TRAFAC class translation factor GTPase superfamily. Classic translation factor GTPase family. LepA subfamily.

The protein localises to the cell inner membrane. The catalysed reaction is GTP + H2O = GDP + phosphate + H(+). Required for accurate and efficient protein synthesis under certain stress conditions. May act as a fidelity factor of the translation reaction, by catalyzing a one-codon backward translocation of tRNAs on improperly translocated ribosomes. Back-translocation proceeds from a post-translocation (POST) complex to a pre-translocation (PRE) complex, thus giving elongation factor G a second chance to translocate the tRNAs correctly. Binds to ribosomes in a GTP-dependent manner. The polypeptide is Elongation factor 4 (Crocosphaera subtropica (strain ATCC 51142 / BH68) (Cyanothece sp. (strain ATCC 51142))).